The following is a 588-amino-acid chain: Adenine deaminase (588 aa).

The protein belongs to the metallo-dependent hydrolases superfamily. Adenine deaminase family. As to quaternary structure, homodimer. Requires Mn(2+) as cofactor.

The catalysed reaction is adenine + H2O + H(+) = hypoxanthine + NH4(+). The protein is Adenine deaminase of Escherichia coli O139:H28 (strain E24377A / ETEC).